Consider the following 135-residue polypeptide: CTP pyrophosphohydrolase (135 aa).

The region spanning 2–127 (KMIEVVAAII…DIPLLEAFMA (126 aa)) is the Nudix hydrolase domain. Substrate contacts are provided by residues 34 to 39 (FAGGKV), Arg-72, and Asp-118. The Nudix box signature appears at 37-58 (GKVEPDESQRQALVRELREELG).

The protein belongs to the Nudix hydrolase family. Monomer. Mg(2+) serves as cofactor. The cofactor is Mn(2+).

It carries out the reaction CTP + H2O = CMP + diphosphate + H(+). The enzyme catalyses dCTP + H2O = dCMP + diphosphate + H(+). Its function is as follows. Hydrolase with a preference for pyrimidine substrates. Has high activity with 5-methyl-dCTP, and much lower activity with CTP, dCTP, 5-hydroxy-dCTP, 2-hydroxy-dATP and 8-hydroxy-dGTP. The protein is CTP pyrophosphohydrolase (nudG) of Escherichia coli (strain K12).